A 234-amino-acid chain; its full sequence is MKVIRVKNQEEGGQVAFSLLKESLAHGAKTLGLATGSTPLTFYKEIVKSDLSFSDVTSINLDEYVGLPVEHDQSYDYFMRENLFNHKPFKENYLPNGLAKDLSVEVSRYDNLIAEHPIDFQILGIGRNGHIGFNEPGTPFDIRTHVVDLEESTIEANSRFFASKEDVPKQAVSMGIASIMESKMIVLMAFGKEKAYAVKEMITGPITESLPASVLQNHDNVIVIVDEEAASELD.

Asp62 functions as the Proton acceptor; for enolization step in the catalytic mechanism. Asn128 functions as the For ring-opening step in the catalytic mechanism. His130 (proton acceptor; for ring-opening step) is an active-site residue. Glu135 acts as the For ring-opening step in catalysis.

This sequence belongs to the glucosamine/galactosamine-6-phosphate isomerase family. NagB subfamily.

The catalysed reaction is alpha-D-glucosamine 6-phosphate + H2O = beta-D-fructose 6-phosphate + NH4(+). Its pathway is amino-sugar metabolism; N-acetylneuraminate degradation; D-fructose 6-phosphate from N-acetylneuraminate: step 5/5. Catalyzes the reversible isomerization-deamination of glucosamine 6-phosphate (GlcN6P) to form fructose 6-phosphate (Fru6P) and ammonium ion. The protein is Glucosamine-6-phosphate deaminase of Streptococcus uberis (strain ATCC BAA-854 / 0140J).